The chain runs to 184 residues: Lipid A acyltransferase PagP (184 aa).

Residues 1-22 form the signal peptide; the sequence is MNIRHGIIAMSSTMLVPLAAEA. Active-site residues include histidine 57, aspartate 100, and serine 101.

The protein belongs to the lipid A palmitoyltransferase family. As to quaternary structure, homodimer.

The protein localises to the cell outer membrane. It catalyses the reaction a lipid A + a 1,2-diacyl-sn-glycero-3-phosphocholine = a hepta-acyl lipid A + a 2-acyl-sn-glycero-3-phosphocholine. It carries out the reaction a lipid IVA + a 1,2-diacyl-sn-glycero-3-phosphocholine = a lipid IVB + a 2-acyl-sn-glycero-3-phosphocholine. The catalysed reaction is a lipid IIA + a 1,2-diacyl-sn-glycero-3-phosphocholine = a lipid IIB + a 2-acyl-sn-glycero-3-phosphocholine. In terms of biological role, transfers a fatty acid residue from the sn-1 position of a phospholipid to the N-linked hydroxyfatty acid chain on the proximal unit of lipid A or its precursors. The protein is Lipid A acyltransferase PagP of Methylobacillus flagellatus (strain ATCC 51484 / DSM 6875 / VKM B-1610 / KT).